A 39-amino-acid chain; its full sequence is Natriuretic peptide TcNPa (39 aa).

Residues 1-8 constitute a propeptide that is removed on maturation; it reads SGSETAKI. Cys12 and Cys28 are disulfide-bonded. Residue Thr35 is glycosylated (O-linked (GalNAc...) threonine).

It belongs to the natriuretic peptide family. O-linked glycans consist of galactosyl-beta(1-3)-N-acetylgalactosamine (Gal-GalNAc). Post-translationally, the synthetic non-glycosylated form shows higher potency on natriuretic receptors (EC(50)=672.90 nM) and NPR2 (EC(50)=261.0 nM). As to expression, expressed by the venom gland.

The protein localises to the secreted. Functionally, snake venom natriuretic peptide that targets both NPR1 (EC(50)=1080.0 nM) and NPR2 (EC(50)=328.60 nM). Exhibits hypotensive and vasodepressor activities. The sequence is that of Natriuretic peptide TcNPa from Tropidechis carinatus (Australian rough-scaled snake).